A 144-amino-acid polypeptide reads, in one-letter code: Large ribosomal subunit protein uL15 (144 aa).

A disordered region spans residues 1–49; the sequence is MRLNTLSPAAGAKSAAKRVGRGIGSGLGKTAGRGHKGQKSRSGGGVRVG. Residues 21–31 are compositionally biased toward gly residues; sequence RGIGSGLGKTA.

It belongs to the universal ribosomal protein uL15 family. Part of the 50S ribosomal subunit.

In terms of biological role, binds to the 23S rRNA. This Shewanella piezotolerans (strain WP3 / JCM 13877) protein is Large ribosomal subunit protein uL15.